A 398-amino-acid polypeptide reads, in one-letter code: UDP-N-acetylglucosamine--N-acetylmuramyl-(pentapeptide) pyrophosphoryl-undecaprenol N-acetylglucosamine transferase (398 aa).

UDP-N-acetyl-alpha-D-glucosamine is bound by residues 15-17, Asn-125, Arg-168, Ser-196, and Gln-297; that span reads TGG.

This sequence belongs to the glycosyltransferase 28 family. MurG subfamily.

The protein localises to the cell inner membrane. The catalysed reaction is di-trans,octa-cis-undecaprenyl diphospho-N-acetyl-alpha-D-muramoyl-L-alanyl-D-glutamyl-meso-2,6-diaminopimeloyl-D-alanyl-D-alanine + UDP-N-acetyl-alpha-D-glucosamine = di-trans,octa-cis-undecaprenyl diphospho-[N-acetyl-alpha-D-glucosaminyl-(1-&gt;4)]-N-acetyl-alpha-D-muramoyl-L-alanyl-D-glutamyl-meso-2,6-diaminopimeloyl-D-alanyl-D-alanine + UDP + H(+). It participates in cell wall biogenesis; peptidoglycan biosynthesis. In terms of biological role, cell wall formation. Catalyzes the transfer of a GlcNAc subunit on undecaprenyl-pyrophosphoryl-MurNAc-pentapeptide (lipid intermediate I) to form undecaprenyl-pyrophosphoryl-MurNAc-(pentapeptide)GlcNAc (lipid intermediate II). The sequence is that of UDP-N-acetylglucosamine--N-acetylmuramyl-(pentapeptide) pyrophosphoryl-undecaprenol N-acetylglucosamine transferase from Erythrobacter litoralis (strain HTCC2594).